An 82-amino-acid polypeptide reads, in one-letter code: MVTIRLSRGGAKKRPFYQIVVADSRSPRDGRFIERVGFFNPLATGNAERLRLDLDRVNAWVEKGASLSDRVSALVKEAQKAA.

Belongs to the bacterial ribosomal protein bS16 family.

The protein is Small ribosomal subunit protein bS16 of Pasteurella multocida (strain Pm70).